The chain runs to 269 residues: Thiazole synthase (269 aa).

Lys-112 serves as the catalytic Schiff-base intermediate with DXP. 1-deoxy-D-xylulose 5-phosphate-binding positions include Gly-173, 199–200, and 221–222; these read AG and NT.

This sequence belongs to the ThiG family. In terms of assembly, homotetramer. Forms heterodimers with either ThiH or ThiS.

It localises to the cytoplasm. The enzyme catalyses [ThiS sulfur-carrier protein]-C-terminal-Gly-aminoethanethioate + 2-iminoacetate + 1-deoxy-D-xylulose 5-phosphate = [ThiS sulfur-carrier protein]-C-terminal Gly-Gly + 2-[(2R,5Z)-2-carboxy-4-methylthiazol-5(2H)-ylidene]ethyl phosphate + 2 H2O + H(+). The protein operates within cofactor biosynthesis; thiamine diphosphate biosynthesis. Functionally, catalyzes the rearrangement of 1-deoxy-D-xylulose 5-phosphate (DXP) to produce the thiazole phosphate moiety of thiamine. Sulfur is provided by the thiocarboxylate moiety of the carrier protein ThiS. In vitro, sulfur can be provided by H(2)S. The protein is Thiazole synthase of Caulobacter vibrioides (strain ATCC 19089 / CIP 103742 / CB 15) (Caulobacter crescentus).